The chain runs to 512 residues: PTS system mannitol-specific EIICB component (512 aa).

Residues 1 to 28 lie on the Cytoplasmic side of the membrane; the sequence is MSQTEEKKGIGRRVQAFGSFLSSMIMPN. Positions 17–349 constitute a PTS EIIC type-2 domain; it reads FGSFLSSMIM…MKFTKEPKQD (333 aa). The chain crosses the membrane as a helical span at residues 29-50; the sequence is IGAFIAWGFIAAIFIDNGWFPN. The Extracellular segment spans residues 51–54; that stretch reads KDLA. The chain crosses the membrane as a helical span at residues 55 to 75; sequence TLAGPMITYLIPLLIAFSGGR. The Cytoplasmic portion of the chain corresponds to 76–139; that stretch reads LIYDLRGGII…QGFEMLFNNF (64 aa). Residues 140–161 form a helical membrane-spanning segment; sequence SAGILGFIMTIAGFKILAPLMK. Over 162 to 170 the chain is Extracellular; that stretch reads FIMHILSVA. The helical transmembrane segment at 171 to 191 threads the bilayer; the sequence is VEALVHAHLLPLVSILVEPAK. The Cytoplasmic portion of the chain corresponds to 192 to 278; sequence IVFLNNAINH…VLMRPLLFIA (87 aa). The chain crosses the membrane as a helical span at residues 279–298; sequence VILGGMTGVATYQATGFGFK. The Extracellular segment spans residues 299–318; the sequence is SPASPGSFIVYCLNAPRGEF. A helical transmembrane segment spans residues 319 to 340; it reads LHMLLGVFLATLVSFVVAALIM. The Cytoplasmic portion of the chain corresponds to 341 to 512; the sequence is KFTKEPKQDL…LNNLKKDDQA (172 aa). The span at 365 to 376 shows a compositional bias: low complexity; sequence SSVASKLVSSDK. The segment at 365–401 is disordered; the sequence is SSVASKLVSSDKNVNTEENASGNVSETSSLDDDPEAL. Over residues 380–392 the composition is skewed to polar residues; it reads TEENASGNVSETS. The region spanning 419 to 512 is the PTS EIIB type-2 domain; that stretch reads NHVIFACDAG…LNNLKKDDQA (94 aa). Cys425 acts as the Phosphocysteine intermediate; for EIIB activity in catalysis. Position 425 is a phosphocysteine; by EIIA (Cys425).

In terms of assembly, homodimer.

The protein localises to the cell membrane. The catalysed reaction is D-mannitol(out) + N(pros)-phospho-L-histidyl-[protein] = D-mannitol 1-phosphate(in) + L-histidyl-[protein]. Its function is as follows. The phosphoenolpyruvate-dependent sugar phosphotransferase system (sugar PTS), a major carbohydrate active transport system, catalyzes the phosphorylation of incoming sugar substrates concomitantly with their translocation across the cell membrane. The enzyme II CmtAB PTS system is involved in D-mannitol transport. This Staphylococcus aureus (strain MRSA252) protein is PTS system mannitol-specific EIICB component (mtlA).